The primary structure comprises 294 residues: MINGSIVALITPMNSDGSVDFASLERLVEFHIDQGTDAIVAVGTTGESATLPMNEHVTVVAQTVKFAAGRIPVIGGNGANATSEAIELTKSLSKVGVAAMLGVTPYYNKPTPKGLVAHYKAVAASTDIPQILYNVPGRTAVDMKPETVAELVGVSNIIGVKEATGDVSRVKRLRELCGNDFMLYSGDDATAREFLLLGGNGVISVANNIVPKAFKAMCDAALAGNAELAASIDEPLRGLYTTLFCEANPIPVKWAAHRMGLIECGHIRLPLTELSEQCHGLLLDAMTRAQIEVK.

Thr-45 serves as a coordination point for pyruvate. Catalysis depends on Tyr-133, which acts as the Proton donor/acceptor. The active-site Schiff-base intermediate with substrate is Lys-161. Residue Ile-203 participates in pyruvate binding.

It belongs to the DapA family. Homotetramer; dimer of dimers.

It localises to the cytoplasm. The catalysed reaction is L-aspartate 4-semialdehyde + pyruvate = (2S,4S)-4-hydroxy-2,3,4,5-tetrahydrodipicolinate + H2O + H(+). Its pathway is amino-acid biosynthesis; L-lysine biosynthesis via DAP pathway; (S)-tetrahydrodipicolinate from L-aspartate: step 3/4. Functionally, catalyzes the condensation of (S)-aspartate-beta-semialdehyde [(S)-ASA] and pyruvate to 4-hydroxy-tetrahydrodipicolinate (HTPA). The sequence is that of 4-hydroxy-tetrahydrodipicolinate synthase from Shewanella sp. (strain MR-4).